The primary structure comprises 322 residues: MAASGEPQRQWQEEVAAVVVVGSCMTDLVSLTSRLPKTGETIHGHKFFIGFGGKGANQCVQAARLGAMTSMVCKVGKDSFGNDYIENLKQNDISTEFTYQTKDAATGTASIIVNNEGQNIIVIVAGANLLLNTEDLRAAANVISRAKVMVCQLEITPATSLEALTMARRSGVKTLFNPAPAIADLDPQFYTLSDVFCCNESEAEILTGLTVGSAADAGEAALVLLKRGCQVVIITLGAEGCVVLSQTEPEPKHIPTEKVKAVDTTGAGDSFVGALAFYLAYYPNLSLEDMLNRSNFIAAVSVQAAGTQSSYPYKKDLPLTLF.

Substrate-binding positions include 25-27, 53-57, and Glu154; these read MTD and GKGAN. ATP is bound by residues Asn199, 235 to 240, and Thr256; that span reads TLGAEG. K(+) is bound by residues Asp263 and Thr265. Residues 268–269 and Asn295 each bind ATP; that span reads GD. Position 269 (Asp269) interacts with substrate. The Proton acceptor role is filled by Asp269. Residues Ser301, Ala304, Gly306, and Ser310 each coordinate K(+).

It belongs to the carbohydrate kinase PfkB family. Ribokinase subfamily. In terms of assembly, homodimer. The cofactor is Mg(2+).

It is found in the cytoplasm. The protein resides in the nucleus. The catalysed reaction is D-ribose + ATP = D-ribose 5-phosphate + ADP + H(+). It functions in the pathway carbohydrate metabolism; D-ribose degradation; D-ribose 5-phosphate from beta-D-ribopyranose: step 2/2. Activated by a monovalent cation that binds near, but not in, the active site. The most likely occupant of the site in vivo is potassium. Ion binding induces a conformational change that may alter substrate affinity. Competitively inhibited by phosphonoacetic acid, etidronate, 2-carboxethylphosphonic acid, N-(phosphonomethyl)glycine, N-(phosphonomethyl)iminodiacetic acid and clodronate. Functionally, catalyzes the phosphorylation of ribose at O-5 in a reaction requiring ATP and magnesium. The resulting D-ribose-5-phosphate can then be used either for sythesis of nucleotides, histidine, and tryptophan, or as a component of the pentose phosphate pathway. This chain is Ribokinase, found in Homo sapiens (Human).